The following is a 469-amino-acid chain: Glutamate--tRNA ligase 1 (469 aa).

The short motif at 10 to 20 is the 'HIGH' region element; sequence PSPTGYLHIGG. 4 residues coordinate Zn(2+): cysteine 99, cysteine 101, cysteine 126, and aspartate 128. A 'KMSKS' region motif is present at residues 237–241; that stretch reads RLSKR. Lysine 240 lines the ATP pocket.

This sequence belongs to the class-I aminoacyl-tRNA synthetase family. Glutamate--tRNA ligase type 1 subfamily. As to quaternary structure, monomer. Zn(2+) is required as a cofactor.

It is found in the cytoplasm. It catalyses the reaction tRNA(Glu) + L-glutamate + ATP = L-glutamyl-tRNA(Glu) + AMP + diphosphate. Catalyzes the attachment of glutamate to tRNA(Glu) in a two-step reaction: glutamate is first activated by ATP to form Glu-AMP and then transferred to the acceptor end of tRNA(Glu). The sequence is that of Glutamate--tRNA ligase 1 from Coxiella burnetii (strain CbuK_Q154) (Coxiella burnetii (strain Q154)).